The following is a 286-amino-acid chain: Pyridoxal kinase PdxY (286 aa).

Substrate is bound by residues Ser-9 and 44-45 (TQ). Residues Asp-111, Ala-143, Glu-148, Lys-181, and 208 to 211 (RPLV) each bind ATP. Asp-223 is a binding site for substrate.

It belongs to the pyridoxine kinase family. PdxY subfamily. As to quaternary structure, homodimer. Requires Mg(2+) as cofactor.

The catalysed reaction is pyridoxal + ATP = pyridoxal 5'-phosphate + ADP + H(+). It participates in cofactor metabolism; pyridoxal 5'-phosphate salvage; pyridoxal 5'-phosphate from pyridoxal: step 1/1. Functionally, pyridoxal kinase involved in the salvage pathway of pyridoxal 5'-phosphate (PLP). Catalyzes the phosphorylation of pyridoxal to PLP. This chain is Pyridoxal kinase PdxY, found in Yersinia pseudotuberculosis serotype I (strain IP32953).